The chain runs to 1009 residues: Mediator of RNA polymerase II transcription subunit 5 (1009 aa).

This sequence belongs to the Mediator complex subunit 5 family. Component of the Mediator complex.

The protein localises to the nucleus. Component of the Mediator complex, a coactivator involved in the regulated transcription of nearly all RNA polymerase II-dependent genes. Mediator functions as a bridge to convey information from gene-specific regulatory proteins to the basal RNA polymerase II transcription machinery. Mediator is recruited to promoters by direct interactions with regulatory proteins and serves as a scaffold for the assembly of a functional preinitiation complex with RNA polymerase II and the general transcription factors. This is Mediator of RNA polymerase II transcription subunit 5 (nut1) from Neosartorya fischeri (strain ATCC 1020 / DSM 3700 / CBS 544.65 / FGSC A1164 / JCM 1740 / NRRL 181 / WB 181) (Aspergillus fischerianus).